The following is a 101-amino-acid chain: Large ribosomal subunit protein bL28 (101 aa).

This sequence belongs to the bacterial ribosomal protein bL28 family.

The sequence is that of Large ribosomal subunit protein bL28 from Caulobacter sp. (strain K31).